The primary structure comprises 206 residues: Large ribosomal subunit protein uL4 (206 aa).

The segment at 43-78 (ARSGNRKQKDREEVHHTTKKPWRQKGTGRARAGMSS) is disordered. The span at 49–58 (KQKDREEVHH) shows a compositional bias: basic and acidic residues. Positions 59–70 (TTKKPWRQKGTG) are enriched in basic residues.

Belongs to the universal ribosomal protein uL4 family. In terms of assembly, part of the 50S ribosomal subunit.

Functionally, one of the primary rRNA binding proteins, this protein initially binds near the 5'-end of the 23S rRNA. It is important during the early stages of 50S assembly. It makes multiple contacts with different domains of the 23S rRNA in the assembled 50S subunit and ribosome. In terms of biological role, forms part of the polypeptide exit tunnel. The chain is Large ribosomal subunit protein uL4 from Herminiimonas arsenicoxydans.